Reading from the N-terminus, the 419-residue chain is MNTVIAFILIFGTLVFFHELGHLILAQRAGILCREFAIGFGPKIFSFKKNETVYTIRLLPIGGFVRMAGEDPEMIEVKPGYTVGLLFDSENKVEKIIINQKEKYPDALVIEVEQADLEHQMRITGYEHGNEDHLSSFSVSETSFFIVDGEEVQIAPYNRQFHSKTVWQRIKAIAAGPIMNFILAYVILVMLGLMQGVPSDEPVLGKLIDNGRAAEAGLQEGDRIQTINGENMRSWTDIVNTVREHPEKELKIVLMRDNVKLTKYVTPEAVKAGDETVGRFGAYNPVKTGVLTSISYGATETATVAQSIVTNLGKLVTGQFSIDMLAGPVGIYDMTDQVAKTGVINLLKLAAFLSINLGIVNLLPIPALDGGRLLFLFIEAIRGKPINREKEAFVVFIGVAFLMLLMLVVTWNDIQRLFL.

The next 4 helical transmembrane spans lie at 4–24 (VIAFILIFGTLVFFHELGHLI), 173–193 (IAAGPIMNFILAYVILVMLGL), 349–369 (LAAFLSINLGIVNLLPIPALD), and 391–411 (EAFVVFIGVAFLMLLMLVVTW). Histidine 18 contributes to the Zn(2+) binding site. Residue glutamate 19 is part of the active site. A Zn(2+)-binding site is contributed by histidine 22. One can recognise a PDZ domain in the interval 184 to 269 (AYVILVMLGL…KLTKYVTPEA (86 aa)).

It belongs to the peptidase M50B family. Zn(2+) serves as cofactor.

The protein localises to the cell membrane. Is responsible for Site-2 cleavage of the RsiW anti-sigma factor. This results, after a third proteolytic step catalyzed by the ClpXP protease, in the release of SigW and the transcription activation of the genes under the control of the sigma-W factor. This Bacillus licheniformis (strain ATCC 14580 / DSM 13 / JCM 2505 / CCUG 7422 / NBRC 12200 / NCIMB 9375 / NCTC 10341 / NRRL NRS-1264 / Gibson 46) protein is Zinc metalloprotease RasP (rasP).